The sequence spans 230 residues: Large ribosomal subunit protein uL1 (230 aa).

It belongs to the universal ribosomal protein uL1 family. As to quaternary structure, part of the 50S ribosomal subunit.

Binds directly to 23S rRNA. The L1 stalk is quite mobile in the ribosome, and is involved in E site tRNA release. In terms of biological role, protein L1 is also a translational repressor protein, it controls the translation of the L11 operon by binding to its mRNA. This is Large ribosomal subunit protein uL1 from Bifidobacterium adolescentis (strain ATCC 15703 / DSM 20083 / NCTC 11814 / E194a).